A 725-amino-acid polypeptide reads, in one-letter code: Methionine--tRNA ligase (725 aa).

A 'HIGH' region motif is present at residues P27–H37. Zn(2+)-binding residues include C158, C161, C171, and C174. A 'KMSKS' region motif is present at residues K348 to S352. Residue K351 participates in ATP binding. A tRNA-binding domain is found at D619 to K725.

The protein belongs to the class-I aminoacyl-tRNA synthetase family. MetG type 1 subfamily. In terms of assembly, homodimer. Zn(2+) serves as cofactor.

Its subcellular location is the cytoplasm. It catalyses the reaction tRNA(Met) + L-methionine + ATP = L-methionyl-tRNA(Met) + AMP + diphosphate. Functionally, is required not only for elongation of protein synthesis but also for the initiation of all mRNA translation through initiator tRNA(fMet) aminoacylation. The polypeptide is Methionine--tRNA ligase (Burkholderia mallei (strain NCTC 10247)).